Here is a 375-residue protein sequence, read N- to C-terminus: Probable serine/threonine-protein kinase PBL28 (375 aa).

Phosphothreonine is present on Thr-65. A Protein kinase domain is found at 76–356 (FSDENLLGKG…MDCVKELQLI (281 aa)). ATP is bound by residues 82–90 (LGKGGFGRV) and Lys-104. Tyr-152 carries the phosphotyrosine modification. Asp-205 serves as the catalytic Proton acceptor. Thr-245 is modified (phosphothreonine). Position 253 is a phosphotyrosine (Tyr-253).

The protein belongs to the protein kinase superfamily. Ser/Thr protein kinase family.

It is found in the cell membrane. The enzyme catalyses L-seryl-[protein] + ATP = O-phospho-L-seryl-[protein] + ADP + H(+). It carries out the reaction L-threonyl-[protein] + ATP = O-phospho-L-threonyl-[protein] + ADP + H(+). Its function is as follows. May be involved in plant defense signaling. The chain is Probable serine/threonine-protein kinase PBL28 from Arabidopsis thaliana (Mouse-ear cress).